The primary structure comprises 455 residues: tRNA modification GTPase MnmE (455 aa).

Residues Arg24, Glu81, and Lys120 each coordinate (6S)-5-formyl-5,6,7,8-tetrahydrofolate. One can recognise a TrmE-type G domain in the interval 216-378; it reads GMTVVIAGRP…LREHLKACMG (163 aa). Asn226 lines the K(+) pocket. Residues 226-231, 245-251, 270-273, 335-338, and 359-361 contribute to the GTP site; these read NAGKSS, TDIAGTT, DTAG, NKAD, and SAR. Ser230 provides a ligand contact to Mg(2+). Residues Thr245, Ile247, and Thr250 each contribute to the K(+) site. Thr251 contacts Mg(2+). Residue Lys455 coordinates (6S)-5-formyl-5,6,7,8-tetrahydrofolate.

The protein belongs to the TRAFAC class TrmE-Era-EngA-EngB-Septin-like GTPase superfamily. TrmE GTPase family. In terms of assembly, homodimer. Heterotetramer of two MnmE and two MnmG subunits. K(+) serves as cofactor.

It is found in the cytoplasm. Its function is as follows. Exhibits a very high intrinsic GTPase hydrolysis rate. Involved in the addition of a carboxymethylaminomethyl (cmnm) group at the wobble position (U34) of certain tRNAs, forming tRNA-cmnm(5)s(2)U34. The polypeptide is tRNA modification GTPase MnmE (Pseudomonas paraeruginosa (strain DSM 24068 / PA7) (Pseudomonas aeruginosa (strain PA7))).